Here is a 711-residue protein sequence, read N- to C-terminus: Ferric/cupric reductase transmembrane component 2 (711 aa).

Residues 1 to 23 (MHWTSILSAILLFCLSGARASPA) form the signal peptide. Residues 24–164 (KTVIRNKVPL…GFYANLDVGN (141 aa)) are Extracellular-facing. N-linked (GlcNAc...) asparagine glycans are attached at residues N85, N108, N120, and N134. The helical transmembrane segment at 165-185 (IYGGIICAYFVAIMAFAGVLH) threads the bilayer. Over 186-235 (CMNYTPFKTVLLKQKLVGYVRGYLTLPTIGSKHASDFSYFRIFTGYLPTR) the chain is Cytoplasmic. A helical transmembrane segment spans residues 236–256 (LEGIIILGYLVLHTVFLAYGY). Over 257–280 (EYDPENIIFKSRRVQVARYVADRS) the chain is Extracellular. Residues 280 to 414 (SGVLAFAHFP…SGIEWIYTAI (135 aa)) form the Ferric oxidoreductase domain. The chain crosses the membrane as a helical span at residues 281–301 (GVLAFAHFPLIVLFAGRNNFL). The Cytoplasmic portion of the chain corresponds to 302–317 (EYISGVKYTSFIMFHK). Residues H316 and H330 each contribute to the heme site. The chain crosses the membrane as a helical span at residues 318-340 (WLGRMMFLDAMIHGSAYTSYTVA). N341 carries an N-linked (GlcNAc...) asparagine glycan. At 341–353 (NKTWATSKNRLYW) the chain is on the extracellular side. The chain crosses the membrane as a helical span at residues 354–374 (QFGVAALCLAGTMVFFSFAVF). Residues 375–377 (RKY) are Cytoplasmic-facing. The helical transmembrane segment at 378-398 (FYEAFLFLHIVLGAMFFYACW) threads the bilayer. Heme contacts are provided by H386 and H400. The Extracellular portion of the chain corresponds to 399 to 400 (EH). A helical membrane pass occupies residues 401 to 423 (VVSLSGIEWIYTAIAIWIVDRII). The 120-residue stretch at 415–534 (AIWIVDRIIR…EGPYGSSSPV (120 aa)) folds into the FAD-binding FR-type domain. Residues 424–711 (RIIKASYFGF…IEYFEEYQCW (288 aa)) are Cytoplasmic-facing. Position 479 to 485 (479 to 485 (HPFTVLD)) interacts with FAD. Residues 526-529 (GPYG) and 677-678 (CG) each bind NADP(+).

The protein belongs to the ferric reductase (FRE) family. FAD serves as cofactor. It depends on heme as a cofactor.

The protein localises to the cell membrane. The catalysed reaction is 2 a Fe(II)-siderophore + NADP(+) + H(+) = 2 a Fe(III)-siderophore + NADPH. In terms of biological role, metalloreductase responsible for reducing extracellular iron and copper prior to import. Catalyzes the reductive uptake of Fe(3+)-salts and Fe(3+) bound to catecholate or hydroxamate siderophores. Fe(3+) is reduced to Fe(2+), which then dissociates from the siderophore and can be imported by the high-affinity Fe(2+) transport complex in the plasma membrane. Also participates in Cu(2+) reduction and Cu(+) uptake. The polypeptide is Ferric/cupric reductase transmembrane component 2 (FRE2) (Saccharomyces cerevisiae (strain ATCC 204508 / S288c) (Baker's yeast)).